Consider the following 243-residue polypeptide: High affinity immunoglobulin epsilon receptor subunit beta (243 aa).

A disordered region spans residues M1–Q48. Over M1 to E59 the chain is Cytoplasmic. The helical transmembrane segment at F60–V79 threads the bilayer. Topologically, residues C80–R97 are extracellular. The helical transmembrane segment at A98–M117 threads the bilayer. The Cytoplasmic segment spans residues S118–S130. The chain crosses the membrane as a helical span at residues L131–L150. The Extracellular portion of the chain corresponds to N151–E179. Residues L180–I199 form a helical membrane-spanning segment. The Cytoplasmic portion of the chain corresponds to I200–S243. Residues Y218 and Y224 each carry the phosphotyrosine modification. S225 carries the post-translational modification Phosphoserine. Residue Y228 is modified to Phosphotyrosine.

The protein belongs to the MS4A family. In terms of assembly, tetramer of an alpha chain, a beta chain, and two disulfide linked gamma chains. Binds LILRB1. Interacts with FES/FPS and LYN. Interacts with FGR. Phosphorylated on tyrosine residues by LYN.

The protein resides in the membrane. High affinity receptor that binds to the Fc region of immunoglobulins epsilon. Aggregation of FCER1 by multivalent antigens is required for the full mast cell response, including the release of preformed mediators (such as histamine) by degranulation and de novo production of lipid mediators and cytokines. Also mediates the secretion of important lymphokines. Binding of allergen to receptor-bound IgE leads to cell activation and the release of mediators responsible for the manifestations of allergy. The polypeptide is High affinity immunoglobulin epsilon receptor subunit beta (Ms4a2) (Rattus norvegicus (Rat)).